The chain runs to 360 residues: Epoxide hydrolase 3 (360 aa).

Residues 22–42 (AFMWSLVFSVALVAAAVYGCI) traverse the membrane as a helical segment. Residue Asp173 is the Nucleophile of the active site. Catalysis depends on Tyr281, which acts as the Proton donor. Residue His337 is the Proton acceptor of the active site.

Belongs to the AB hydrolase superfamily. Epoxide hydrolase family.

It localises to the microsome membrane. It catalyses the reaction an epoxide + H2O = an ethanediol. It carries out the reaction 9,10-epoxyoctadecanoate + H2O = 9,10-dihydroxyoctadecanoate. The enzyme catalyses 9,10-epoxy-(12Z)-octadecenoate + H2O = 9,10-dihydroxy-(12Z)-octadecenoate. The catalysed reaction is 8,9-epoxy-(5Z,11Z,14Z)-eicosatrienoate + H2O = 8,9-dihydroxy-(5Z,11Z,14Z)-eicosatrienoate. It catalyses the reaction 11,12-epoxy-(5Z,8Z,14Z)-eicosatrienoate + H2O = 11,12-dihydroxy-(5Z,8Z,14Z)-eicosatrienoate. It carries out the reaction 14,15-epoxy-(5Z,8Z,11Z)-eicosatrienoate + H2O = 14,15-dihydroxy-(5Z,8Z,11Z)-eicosatrienoate. With respect to regulation, inhibited by 1-(1-acetylpiperidin-4-yl)-3-(4-(trifl uoromethoxy)phenyl)urea (TPAU), 1-cyclohexyl-3-dodecylurea (CDU), 12-(3-adamantan-1-yl-ureido)-dodecanoic acid (AUDA), 1-((3S, 5S, 7S)-adamantan-1-yl)-3-(5-(2-(2-ethoxyethoxy) ethoxy)pentyl)urea (AEPU) and to a lesser extent by 8-(3-((3S, 5S, 7S)-adamantan-1-yl)ureido) octanoic acid (AUOA). Its function is as follows. Catalyzes the hydrolysis of epoxide-containing fatty acids. Active in vitro against epoxyeicosatrienoic acids (EETs) including 8,9-EET, 9,10-EET, 11,12-EET and 14,15-EET and leukotoxin. The sequence is that of Epoxide hydrolase 3 (EPHX3) from Homo sapiens (Human).